The chain runs to 1215 residues: RNA-dependent RNA polymerase 1 (1215 aa).

The protein belongs to the RdRP family. Cid12, hrr1 and rdp1 interact forming the RNA-directed RNA polymerase complex (RDRC). The RDRC complex interacts with the RITS complex via interaction between ago1 and hrr1. Clr4 has a role in mediating this interaction.

The protein localises to the cytoplasm. Its subcellular location is the nucleus. It localises to the chromosome. The protein resides in the telomere. It is found in the centromere. It catalyses the reaction RNA(n) + a ribonucleoside 5'-triphosphate = RNA(n+1) + diphosphate. Its function is as follows. Has a role in the RNA interference (RNAi) pathway which is important for heterochromatin formation, accurate chromosome segregation, centromere cohesion and telomere function during mitosis and meiosis. Required for both post-transcriptional and transcriptional gene silencing. Required for silencing at the centromeres and for initiation of transcriptionally silent heterochromatin at the mating type locus. Promotes histone H3 'Lys-10' methylation necessary for centromere function. Required for recruitment of swi6 and cohesin to an ectopic dg repeat. A member of the RNA-directed RNA polymerase complex (RDRC) which is involved in the generation of small interfering RNAs (siRNAs) and mediates their association with the RNA-induced transcriptional silencing (RITS) complex. RITS acts as a priming complex for dsRNA synthesis at the site of non-coding centromeric RNA. Its RNA-dependent RNA polymerase activity is critical in siRNA production necessary for heterochromatin formation. In Schizosaccharomyces pombe (strain 972 / ATCC 24843) (Fission yeast), this protein is RNA-dependent RNA polymerase 1 (rdp1).